The primary structure comprises 196 residues: Large ribosomal subunit protein bL25 (196 aa).

The disordered stretch occupies residues 177 to 196; sequence VISIAPPKKDAEAETESAAG.

The protein belongs to the bacterial ribosomal protein bL25 family. CTC subfamily. As to quaternary structure, part of the 50S ribosomal subunit; part of the 5S rRNA/L5/L18/L25 subcomplex. Contacts the 5S rRNA. Binds to the 5S rRNA independently of L5 and L18.

In terms of biological role, this is one of the proteins that binds to the 5S RNA in the ribosome where it forms part of the central protuberance. In Chlorobium limicola (strain DSM 245 / NBRC 103803 / 6330), this protein is Large ribosomal subunit protein bL25.